The sequence spans 537 residues: Ceramide kinase (537 aa).

The interval 1–115 is essential for enzyme activity; the sequence is MGATGAAEPL…CPEEQLCHLW (115 aa). Residues 1–125 form a required for binding to sulfatide and phosphoinositides region; it reads MGATGAAEPL…LQTLREMLEK (125 aa). The DAGKc domain occupies 128-278; it reads SRPKHLLVFI…MDVSSVHHNS (151 aa). ATP contacts are provided by residues 138 to 140 and 170 to 174; these read NPF and TEHAN. 195 to 198 serves as a coordination point for substrate; that stretch reads GGDG. Aspartate 197 serves as the catalytic Proton donor/acceptor. ATP is bound by residues glutamate 202, 239 to 241, arginine 304, and arginine 310; that span reads GST. Phosphoserine is present on residues serine 340 and serine 408. An ATP-binding site is contributed by 502 to 504; sequence DGE.

The cofactor is Ca(2+). It depends on Mg(2+) as a cofactor. High level expression in heart, brain, skeletal muscle, kidney and liver; moderate in peripheral blood leukocytes and thymus; very low in spleen, small intestine, placenta and lung.

It is found in the cytoplasm. The protein localises to the cell membrane. The catalysed reaction is an N-acylsphing-4-enine + ATP = an N-acylsphing-4-enine 1-phosphate + ADP + H(+). It carries out the reaction N-(hexanoyl)sphing-4-enine + ATP = N-hexanoylsphing-4-enine 1-phosphate + ADP + H(+). It catalyses the reaction N-(acetyl)-sphing-4-enine + ATP = N-(acetyl)-sphing-4-enine-1-phosphate + ADP + H(+). The enzyme catalyses N-hexadecanoylsphing-4-enine + ATP = N-(hexadecanoyl)-sphing-4-enine-1-phosphate + ADP + H(+). The catalysed reaction is N-hexanoyl-(4R)-hydroxysphinganine + ATP = N-hexanoyl-(4R)-hydroxysphinganine-1-phosphate + ADP + H(+). Its activity is regulated as follows. Inhibited by sulfatide. Inhibited by sphinganine, sphingenine, and N,N-Dimethylsphingosine (DMS). Cardiolipin at 0.1 uM significantly increases activity, whereas at concentrations &gt;1 uM has an inhibitory effect. In terms of biological role, catalyzes specifically the phosphorylation of ceramide to form ceramide 1-phosphate. Acts efficiently on natural and analog ceramides (C6, C8, C16 ceramides, and C8-dihydroceramide), to a lesser extent on C2-ceramide and C6-dihydroceramide, but not on other lipids, such as various sphingosines. Shows a greater preference for D-erythro isomer of ceramides. Binds phosphoinositides. In Homo sapiens (Human), this protein is Ceramide kinase (CERK).